The sequence spans 233 residues: MKHNLNAHEARVIGCLLEKQVTTPEQYPMSLNGLTLACNQKTSRDPVMELSESQVQQTLDFLLKKHLIRSQSGNRVMKYEHRFCNSEFGDLKFSPAEVAVITLLLLRGAQTPGELRTRTNRMYEFADVAETEETLKTLSLREDGPFVVRLAREPGKRESRFMPLFSGDVASSLLAAGEAEENNHTLEANPRETHSFENIALEKTALEARVAQLEQQVIQLSRRLDDVLIQLDD.

It belongs to the UPF0502 family.

The sequence is that of UPF0502 protein YpsIP31758_2048 from Yersinia pseudotuberculosis serotype O:1b (strain IP 31758).